The following is a 492-amino-acid chain: Probable cytochrome P450 516B1 (492 aa).

Residues 1–17 (MYLILSLIIFLAYVAFH) form a helical membrane-spanning segment. Residue cysteine 438 coordinates heme.

This sequence belongs to the cytochrome P450 family. It depends on heme as a cofactor.

Its subcellular location is the membrane. The sequence is that of Probable cytochrome P450 516B1 (cyp516B1) from Dictyostelium discoideum (Social amoeba).